Consider the following 372-residue polypeptide: Tribbles homolog 1 (372 aa).

Disordered stretches follow at residues 1–23 (MRVG…ALLF) and 52–86 (ECSS…GSAP). Residues 59–75 (YLSPPGSPCSPQPPPAA) show a composition bias toward pro residues. The Protein kinase domain maps to 91 to 338 (IADYLLLPLA…APEILLHPWF (248 aa)). Positions 355–360 (DQIVPE) match the COP1-binding motif.

The protein belongs to the protein kinase superfamily. CAMK Ser/Thr protein kinase family. Tribbles subfamily. In terms of assembly, monomer. Interacts (via protein kinase domain) with CEBPA. Interacts with COP1. Expressed in most human tissues with the highest levels in skeletal muscle, thyroid gland, pancreas, peripheral blood leukocytes, and bone marrow.

Its function is as follows. Adapter protein involved in protein degradation by interacting with COP1 ubiquitin ligase. The COP1-binding motif is masked by autoinhibitory interactions with the protein kinase domain. Serves to alter COP1 substrate specificity by directing the activity of COP1 toward CEBPA. Binds selectively the recognition sequence of CEBPA. Regulates myeloid cell differentiation by altering the expression of CEBPA in a COP1-dependent manner. Controls macrophage, eosinophil and neutrophil differentiation via the COP1-binding domain. Interacts with MAPK kinases and regulates activation of MAP kinases, but has no kinase activity. This chain is Tribbles homolog 1, found in Homo sapiens (Human).